The sequence spans 174 residues: RNA polymerase sigma factor CarQ (174 aa).

A Polymerase core binding motif is present at residues 39-52 (DLLQATFLSVIRSR). A disordered region spans residues 86 to 106 (YASREDTATPASAAPDDSDPS). A DNA-binding region (H-T-H motif) is located at residues 136–155 (FEEIGALRGISPGAARLRAH).

This sequence belongs to the sigma-70 factor family. ECF subfamily.

Functionally, sigma factors are initiation factors that promote the attachment of RNA polymerase to specific initiation sites and are then released. This sigma factor regulates genes for the light induced biosynthesis of carotenoids. In Myxococcus xanthus, this protein is RNA polymerase sigma factor CarQ (carQ).